Reading from the N-terminus, the 367-residue chain is 2-aminoethylphosphonate--pyruvate transaminase (367 aa).

The residue at position 194 (Lys-194) is an N6-(pyridoxal phosphate)lysine.

The protein belongs to the class-V pyridoxal-phosphate-dependent aminotransferase family. PhnW subfamily. Homodimer. Requires pyridoxal 5'-phosphate as cofactor.

The enzyme catalyses (2-aminoethyl)phosphonate + pyruvate = phosphonoacetaldehyde + L-alanine. Functionally, involved in phosphonate degradation. In Salmonella schwarzengrund (strain CVM19633), this protein is 2-aminoethylphosphonate--pyruvate transaminase.